We begin with the raw amino-acid sequence, 380 residues long: MEEGGDFDNYYGADNQSECEYTDWKSSGALIPAIYMLVFLLGTTGNGLVLWTVFRSSREKRRSADIFIASLAVADLTFVVTLPLWATYTYRDYDWPFGTFSCKLSSYLIFVNMYASVFCLTGLSFDRYLAIVRPVANARLRLRVSGAVATAVLWVLAALLAMPVMVFRTTGDLENTTKVQCYMDYSMVATVSSDWAWEVGLGVSSTTVGFVVPFTIMLTCYFFIAQTIAGHFRKERIEGLRKRRRLLSIIVVLVVTFALCWMPYHLVKTLYMLGSLLHWPCDFDLFLMNVFPYCTCISYVNSCLNPFLYAFFDPRFRQACTSMLCCGQSRCAGTSHSSSGEKSASYSSGHSQGPGPNMGKGGEQMHEKSIPYSQETLVVD.

Residues 1-30 lie on the Extracellular side of the membrane; sequence MEEGGDFDNYYGADNQSECEYTDWKSSGAL. N-linked (GlcNAc...) asparagine glycosylation is present at Asn15. 2 disulfides stabilise this stretch: Cys19–Cys281 and Cys102–Cys181. Residues 31–54 form a helical membrane-spanning segment; the sequence is IPAIYMLVFLLGTTGNGLVLWTVF. The Cytoplasmic portion of the chain corresponds to 55–64; sequence RSSREKRRSA. A helical membrane pass occupies residues 65-86; that stretch reads DIFIASLAVADLTFVVTLPLWA. The Extracellular segment spans residues 87 to 99; it reads TYTYRDYDWPFGT. A helical transmembrane segment spans residues 100-125; sequence FSCKLSSYLIFVNMYASVFCLTGLSF. The Cytoplasmic segment spans residues 126 to 146; it reads DRYLAIVRPVANARLRLRVSG. A helical transmembrane segment spans residues 147–164; sequence AVATAVLWVLAALLAMPV. Topologically, residues 165 to 198 are extracellular; the sequence is MVFRTTGDLENTTKVQCYMDYSMVATVSSDWAWE. N-linked (GlcNAc...) asparagine glycosylation occurs at Asn175. The helical transmembrane segment at 199-223 threads the bilayer; the sequence is VGLGVSSTTVGFVVPFTIMLTCYFF. The Cytoplasmic segment spans residues 224-246; it reads IAQTIAGHFRKERIEGLRKRRRL. The chain crosses the membrane as a helical span at residues 247–270; it reads LSIIVVLVVTFALCWMPYHLVKTL. Topologically, residues 271 to 289 are extracellular; that stretch reads YMLGSLLHWPCDFDLFLMN. The chain crosses the membrane as a helical span at residues 290 to 312; it reads VFPYCTCISYVNSCLNPFLYAFF. Over 313–380 the chain is Cytoplasmic; that stretch reads DPRFRQACTS…PYSQETLVVD (68 aa). The span at 342–351 shows a compositional bias: low complexity; that stretch reads KSASYSSGHS. A disordered region spans residues 342–380; it reads KSASYSSGHSQGPGPNMGKGGEQMHEKSIPYSQETLVVD. Polar residues predominate over residues 371 to 380; the sequence is PYSQETLVVD.

Belongs to the G-protein coupled receptor 1 family. Homodimer; dimerization inhibits APLNR-mediated G protein and beta-arrestin signaling pathways compared to monomeric APLNR.

Its subcellular location is the cell membrane. In terms of biological role, g protein-coupled receptor for peptide hormones apelin (APLN) and apelin receptor early endogenous ligand (APELA/ELA), that plays a role in the regulation of normal cardiovascular function and fluid homeostasis. When acting as apelin receptor, activates both G(i) protein pathway that inhibits adenylate cyclase activity, and the beta-arrestin pathway that promotes internalization of the receptor. APLNR/APJ also functions as mechanoreceptor that is activated by pathological stimuli in a G-protein-independent fashion to induce beta-arrestin signaling, hence eliciting cardiac hypertrophy. However, the presence of apelin ligand blunts cardiac hypertrophic induction from APLNR/APJ on response to pathological stimuli. Plays a key role in early development such as gastrulation, blood vessels formation and heart morphogenesis by acting as a APELA receptor. May promote angioblast migration toward the embryonic midline, i.e. the position of the future vessel formation, during vasculogenesis. Promotes sinus venosus (SV)-derived endothelial cells migration into the developing heart to promote coronary blood vessel development. Also plays a role in various processes in adults such as regulation of blood vessel formation, blood pressure, heart contractility and heart failure. (Microbial infection) Alternative coreceptor with CD4 for HIV-1 infection; may be involved in the development of AIDS dementia. In Macaca mulatta (Rhesus macaque), this protein is Apelin receptor (APLNR).